The sequence spans 476 residues: Probable serine carboxypeptidase CPVL (476 aa).

The signal sequence occupies residues 1–22; sequence MVGTMWKVIVSLVLLMPGSCDG. N-linked (GlcNAc...) asparagine glycosylation is found at Asn-81 and Asn-132. Ser-204 is a catalytic residue. N-linked (GlcNAc...) asparagine glycans are attached at residues Asn-307 and Asn-346. Catalysis depends on residues Asp-388 and His-448.

This sequence belongs to the peptidase S10 family.

Its function is as follows. May be involved in the digestion of phagocytosed particles in the lysosome, participation in an inflammatory protease cascade, and trimming of peptides for antigen presentation. This chain is Probable serine carboxypeptidase CPVL (CPVL), found in Pongo abelii (Sumatran orangutan).